Consider the following 895-residue polypeptide: Transcription factor SWI6 (895 aa).

The span at 1–45 shows a compositional bias: polar residues; it reads MASTVAGNSFVSQQHPGNLHSANLQSQSQGFRRQNSTSSVPSTAS. The disordered stretch occupies residues 1-107; sequence MASTVAGNSF…SDQNVPQQPQ (107 aa). Residues 64-100 are compositionally biased toward low complexity; the sequence is MSSQQSQPPASQQSFSMSQTGSQPQPSQSSFRSYSDQ. The HTH APSES-type domain maps to 112-219; that stretch reads IYTAVYSNVE…NRNPDGSVSQ (108 aa). A DNA-binding region (H-T-H motif) is located at residues 143–164; sequence ATQILKVAGVEKGKRTKILEKE. Disordered regions lie at residues 272 to 293 and 323 to 358; these read ARFDSPGPRGRNGPTRAPSFQR and NMAFSAGSEPQPGGLNGTEPPRKRQRMDMTPANSFG. 2 ANK repeats span residues 458 to 488 and 607 to 636; these read QCHTALHWAATLSRMTILRRLIEAGASPFRV and AGDTALNIAARIGNRSIISQLLEVCASPHI. Residues 653-684 are disordered; that stretch reads SDGAMKTKGDSGGDVENGDVGGSSQKSNESSN. Residues 674–684 are compositionally biased toward polar residues; that stretch reads GSSQKSNESSN. Positions 698-759 form a coiled coil; that stretch reads SANFQEEIKN…VTNLQRAEER (62 aa).

The protein localises to the nucleus. Transcription factor that plays a role downstream of the MCK1-MKK2-MPS1 cascade. Required for hyphal morphogenesis and pathogenicity. Is an important oxidative stress response regulator and plays a positive role in the regulation of extracellular peroxidases. The chain is Transcription factor SWI6 from Pyricularia oryzae (strain 70-15 / ATCC MYA-4617 / FGSC 8958) (Rice blast fungus).